A 156-amino-acid polypeptide reads, in one-letter code: ATP synthase subunit b (156 aa).

A helical transmembrane segment spans residues 3–23 (ITLTIFAQALAFAGLIWIVAT).

Belongs to the ATPase B chain family. F-type ATPases have 2 components, F(1) - the catalytic core - and F(0) - the membrane proton channel. F(1) has five subunits: alpha(3), beta(3), gamma(1), delta(1), epsilon(1). F(0) has three main subunits: a(1), b(2) and c(10-14). The alpha and beta chains form an alternating ring which encloses part of the gamma chain. F(1) is attached to F(0) by a central stalk formed by the gamma and epsilon chains, while a peripheral stalk is formed by the delta and b chains.

The protein localises to the cell inner membrane. In terms of biological role, f(1)F(0) ATP synthase produces ATP from ADP in the presence of a proton or sodium gradient. F-type ATPases consist of two structural domains, F(1) containing the extramembraneous catalytic core and F(0) containing the membrane proton channel, linked together by a central stalk and a peripheral stalk. During catalysis, ATP synthesis in the catalytic domain of F(1) is coupled via a rotary mechanism of the central stalk subunits to proton translocation. Its function is as follows. Component of the F(0) channel, it forms part of the peripheral stalk, linking F(1) to F(0). In Xanthomonas axonopodis pv. citri (strain 306), this protein is ATP synthase subunit b.